The chain runs to 78 residues: U-scoloptoxin(04)-Er1b (78 aa).

The signal sequence occupies residues 1-24 (MTRHLIFAAVLLVCLFVCWNAVGA). The propeptide occupies 25–28 (QDAR).

It belongs to the scoloptoxin-04 family. Contains 2 disulfide bonds. Expressed by the venom gland.

Its subcellular location is the secreted. In Ethmostigmus rubripes (Giant centipede), this protein is U-scoloptoxin(04)-Er1b.